The following is a 384-amino-acid chain: MKPQQLATQKFSEHYGYSAAQTVFAPGRVNIIGEHTDYNDGFVMPCAINYGMAVSFSKRDDSVWRVYAIDIDEQDEFDLSRPIEPSEHKWANYVRGVVKYIQEKCPEFKQGADLAMTSDVPMSSGLSSSAALEISIGKTAQVLGDLPLGLAEIALIGQQAENKFVGANCGNMDQLTSALGQKDQVIMIDCRSLEITPTPVPHGYSIAIINSNVKHDLVTGEYNSRRQECEFAARFFGVKALRDVTPEQFIERAAELQAENELAYKRAKHIISENQRVLEAVEALKANDMVKLGQLMAGSHDSMRDDFEITIPEIDYLVELAQIAIGKNGGARMTGGGFGGCIVCLVPDGKVEHLRRIIADNYEKQTGIKETFHLCTACDGVHLI.

A substrate-binding site is contributed by 34-37 (EHTD). 123–129 (SSGLSSS) is an ATP binding site. Mg(2+) contacts are provided by S129 and E161. The Proton acceptor role is filled by D173. Residue Y222 coordinates substrate.

The protein belongs to the GHMP kinase family. GalK subfamily.

The protein resides in the cytoplasm. It carries out the reaction alpha-D-galactose + ATP = alpha-D-galactose 1-phosphate + ADP + H(+). It participates in carbohydrate metabolism; galactose metabolism. Its function is as follows. Catalyzes the transfer of the gamma-phosphate of ATP to D-galactose to form alpha-D-galactose-1-phosphate (Gal-1-P). In Actinobacillus pleuropneumoniae serotype 5b (strain L20), this protein is Galactokinase.